A 51-amino-acid polypeptide reads, in one-letter code: Non-specific lipid-transfer protein (51 aa).

The protein belongs to the plant LTP family.

Functionally, plant non-specific lipid-transfer proteins transfer phospholipids as well as galactolipids across membranes. May play a role in wax or cutin deposition in the cell walls of expanding epidermal cells and certain secretory tissues. This is Non-specific lipid-transfer protein from Lycium barbarum (Barbary matrimony-vine).